The sequence spans 353 residues: Photosystem II D2 protein (353 aa).

Thr-2 bears the N-acetylthreonine mark. Residue Thr-2 is modified to Phosphothreonine. The chain crosses the membrane as a helical span at residues 41–61; it reads CAYFALGGWFTGTTFVTSWYT. His-118 lines the chlorophyll a pocket. A helical membrane pass occupies residues 125 to 141; that stretch reads GFMLRQFELARSVQLRP. Positions 130 and 143 each coordinate pheophytin a. Residues 153 to 166 form a helical membrane-spanning segment; that stretch reads VFVSVFLIYPLGQS. Position 198 (His-198) interacts with chlorophyll a. Residues 208-228 traverse the membrane as a helical segment; sequence AALLCAIHGATVENTLFEDGD. A plastoquinone contacts are provided by His-215 and Phe-262. A Fe cation-binding site is contributed by His-215. His-269 lines the Fe cation pocket. Residues 279–295 traverse the membrane as a helical segment; the sequence is GLWMSAIGVVGLALNLR.

Belongs to the reaction center PufL/M/PsbA/D family. In terms of assembly, PSII is composed of 1 copy each of membrane proteins PsbA, PsbB, PsbC, PsbD, PsbE, PsbF, PsbH, PsbI, PsbJ, PsbK, PsbL, PsbM, PsbT, PsbX, PsbY, PsbZ, Psb30/Ycf12, at least 3 peripheral proteins of the oxygen-evolving complex and a large number of cofactors. It forms dimeric complexes. The cofactor is The D1/D2 heterodimer binds P680, chlorophylls that are the primary electron donor of PSII, and subsequent electron acceptors. It shares a non-heme iron and each subunit binds pheophytin, quinone, additional chlorophylls, carotenoids and lipids. There is also a Cl(-1) ion associated with D1 and D2, which is required for oxygen evolution. The PSII complex binds additional chlorophylls, carotenoids and specific lipids..

It localises to the plastid. It is found in the chloroplast thylakoid membrane. It catalyses the reaction 2 a plastoquinone + 4 hnu + 2 H2O = 2 a plastoquinol + O2. Photosystem II (PSII) is a light-driven water:plastoquinone oxidoreductase that uses light energy to abstract electrons from H(2)O, generating O(2) and a proton gradient subsequently used for ATP formation. It consists of a core antenna complex that captures photons, and an electron transfer chain that converts photonic excitation into a charge separation. The D1/D2 (PsbA/PsbD) reaction center heterodimer binds P680, the primary electron donor of PSII as well as several subsequent electron acceptors. D2 is needed for assembly of a stable PSII complex. The sequence is that of Photosystem II D2 protein from Saccharum hybrid (Sugarcane).